Here is a 466-residue protein sequence, read N- to C-terminus: Probable agmatine/putrescine antiporter AguD (466 aa).

Helical transmembrane passes span 8–28 (FSLF…EAAA), 30–50 (VAAI…AFLL), 85–105 (ASWF…VLCP), 120–140 (ISLL…LYPV), 144–164 (VWIL…LGGL), 192–212 (LSFI…CTFA), 226–246 (IIIG…GIGV), 273–293 (WFIS…MVSW), 325–345 (WGAA…APLL), 350–370 (LFWS…IPVF), 398–418 (VYMA…AIPL), and 426–446 (TEQL…ELII).

Belongs to the amino acid-polyamine-organocation (APC) superfamily. Glutamate:GABA antiporter (GGA) (TC 2.A.3.7) family.

The protein localises to the cell membrane. Probably catalyzes agmatine/putrescine exchange. The polypeptide is Probable agmatine/putrescine antiporter AguD (Lactococcus lactis subsp. lactis (strain IL1403) (Streptococcus lactis)).